The chain runs to 554 residues: Calcium/calmodulin-dependent protein kinase type II delta 2 chain (554 aa).

In terms of domain architecture, Protein kinase spans 13–271 (YQLFEELGKG…AAEAPKHPWI (259 aa)). ATP contacts are provided by residues 19–27 (LGKGAFSVV) and Lys-42. Residue Asp-135 is the Proton acceptor of the active site. Thr-286 bears the Phosphothreonine mark. Phosphoserine is present on residues Ser-314 and Ser-318. Disordered regions lie at residues 324–375 (PDGV…TIED) and 392–413 (WQPSVGRPQNSEPKQAPNSSVQ). A compositionally biased stretch (polar residues) spans 330-340 (NNKTNLASSPK). The residue at position 372 (Thr-372) is a Phosphothreonine.

It belongs to the protein kinase superfamily. CAMK Ser/Thr protein kinase family. CaMK subfamily. CAMK2 is composed of four different chains: alpha, beta, gamma, and delta. The different isoforms assemble into homo- or heteromultimeric holoenzymes composed of 8 to 12 subunits. In terms of tissue distribution, first detected at 18 hpf. At 24 hpf, expressed in discrete anterior locations and along either side of the midline. At 48 hpf, expression is predominantly in the forebrain, and then accumulates in the forebrain, hindbrain, and retinal epithelium at 72 hpf.

The enzyme catalyses L-seryl-[protein] + ATP = O-phospho-L-seryl-[protein] + ADP + H(+). It carries out the reaction L-threonyl-[protein] + ATP = O-phospho-L-threonyl-[protein] + ADP + H(+). Its activity is regulated as follows. Autophosphorylation of CAMK2 plays an important role in the regulation of the kinase activity. In terms of biological role, caM-kinase II (CAMK2) is a prominent kinase in the central nervous system. The protein is Calcium/calmodulin-dependent protein kinase type II delta 2 chain (camk2d2) of Danio rerio (Zebrafish).